Consider the following 470-residue polypeptide: Membrane-bound lytic murein transglycosylase F (470 aa).

A signal peptide spans 1–21; that stretch reads MLKEKLIIIITLVMLLCACDI. The non-LT domain stretch occupies residues 22-259; sequence QEQSTQLAQI…VLEEKYFGHV (238 aa). Positions 260–470 are LT domain; that stretch reads RQFNYVNTLA…PKIGDEVEAK (211 aa). The active site involves E304.

This sequence in the N-terminal section; belongs to the bacterial solute-binding protein 3 family. It in the C-terminal section; belongs to the transglycosylase Slt family.

The protein localises to the cell outer membrane. The enzyme catalyses Exolytic cleavage of the (1-&gt;4)-beta-glycosidic linkage between N-acetylmuramic acid (MurNAc) and N-acetylglucosamine (GlcNAc) residues in peptidoglycan, from either the reducing or the non-reducing ends of the peptidoglycan chains, with concomitant formation of a 1,6-anhydrobond in the MurNAc residue.. Functionally, murein-degrading enzyme that degrades murein glycan strands and insoluble, high-molecular weight murein sacculi, with the concomitant formation of a 1,6-anhydromuramoyl product. Lytic transglycosylases (LTs) play an integral role in the metabolism of the peptidoglycan (PG) sacculus. Their lytic action creates space within the PG sacculus to allow for its expansion as well as for the insertion of various structures such as secretion systems and flagella. This is Membrane-bound lytic murein transglycosylase F from Pseudoalteromonas translucida (strain TAC 125).